Here is a 601-residue protein sequence, read N- to C-terminus: Serine/threonine-protein phosphatase 2A 65 kDa regulatory subunit A beta isoform (601 aa).

An N-acetylalanine modification is found at Ala-2. HEAT repeat units follow at residues 20–58, 59–96, 97–135, 136–173, 174–212, 213–251, 252–290, 291–333, 334–372, 373–411, 412–450, 451–489, 490–528, 529–567, and 568–601; these read DSLYPIAVLIDELRNEDVQLRLNSIKKLSTIALALGVER, TRSELLPFLTDTIYDEDEVLLALAEQLGNFTGLVGGPD, FAHCLLPPLENLATVEETVVRDKAVESLRQISQEHTPVA, LEAYFVPLVKRLASGDWFTSRTSACGLFSVCYPRASNA, VKAEIRQQFRSLCSDDTPMVRRAAASKLGEFAKVLELDS, VKSEIVPLFTSLASDEQDSVRLLAVEACVSIAQLLSQDD, LETLVMPTLRQAAEDKSWRVRYMVADRFSELQKAMGPKI, TLND…RETI, IMNQILPYIKELVSDTNQHVKSALASVIMGLSTILGKEN, TIEHLLPLFLAQLKDECPDVRLNIISNLDCVNEVIGIRQ, LSQSLLPAIVELAEDAKWRVRLAIIEYMPLLAGQLGVEF, FDEKLNSLCMAWLVDHVYAIREAATNNLMKLVQKFGTEW, AQNTIVPKVLVMANDPNYLHRMTTLFCINALSEACGQEI, TTKQMLPIVLKMAGDQVANVRFNVAKSLQKIGPILDTNA, and LQGEVKPVLQKLGQDEDMDVKYFAQEAISVLALA.

This sequence belongs to the phosphatase 2A regulatory subunit A family. In terms of assembly, PP2A consists of a common heterodimeric core enzyme, composed of a 36 kDa catalytic subunit (subunit C) and a 65 kDa constant regulatory subunit (PR65 or subunit A), that associates with a variety of regulatory subunits. Proteins that associate with the core dimer include three families of regulatory subunits B (the R2/B/PR55/B55, R3/B''/PR72/PR130/PR59 and R5/B'/B56 families), the 48 kDa variable regulatory subunit, viral proteins, and cell signaling molecules. Interacts with IPO9. Interacts with SGO1. Interacts with RAF1.

The PR65 subunit of protein phosphatase 2A serves as a scaffolding molecule to coordinate the assembly of the catalytic subunit and a variable regulatory B subunit. The polypeptide is Serine/threonine-protein phosphatase 2A 65 kDa regulatory subunit A beta isoform (PPP2R1B) (Homo sapiens (Human)).